Reading from the N-terminus, the 146-residue chain is Ferredoxin-type protein FwdE (146 aa).

2 4Fe-4S ferredoxin-type domains span residues 90-115 and 116-145; these read IKLFWDENSCIACGSCLGCAALTLDN and FTVGIDEDTCHLCASCIFRCPTNSLKFIKE. Residues Cys-125, Cys-128, Cys-131, and Cys-135 each contribute to the [4Fe-4S] cluster site.

Requires [4Fe-4S] cluster as cofactor.

The sequence is that of Ferredoxin-type protein FwdE (fwdE) from Methanocaldococcus jannaschii (strain ATCC 43067 / DSM 2661 / JAL-1 / JCM 10045 / NBRC 100440) (Methanococcus jannaschii).